The following is a 168-amino-acid chain: Bcl2-associated agonist of cell death (168 aa).

Met-1 is subject to N-acetylmethionine. The interval 1-105 is disordered; sequence MFQIPEFEPS…RSRSAPPNLW (105 aa). The residue at position 25 (Ser-25) is a Phosphoserine. A compositionally biased stretch (polar residues) spans 49–60; that stretch reads SHQQEQPTSSSH. Residues Ser-75 and Ser-91 each carry the phosphoserine modification. An asymmetric dimethylarginine; by PRMT1 mark is found at Arg-94 and Arg-96. A Phosphoserine modification is found at Ser-97. Ser-99 is subject to Phosphoserine; by PKA, PKB, PAK1, RPS6KA1, RPS6KB1 and PKC/PRKCQ. Ser-99 is modified (phosphoserine; by PKB/AKT1). Residues 110 to 124 carry the BH3 motif; the sequence is YGRELRRMSDEFVDS. Phosphoserine is present on residues Ser-118 and Ser-134. The segment at 125 to 145 is disordered; that stretch reads FKKGLPRPKSAGTATQMRQSS. A compositionally biased stretch (polar residues) spans 136 to 145; it reads GTATQMRQSS. Arg-161 carries the omega-N-methylarginine modification.

It belongs to the Bcl-2 family. Forms heterodimers with the anti-apoptotic proteins, Bcl-X(L), Bcl-2 and Bcl-W. Also binds protein S100A10. The Ser-75/Ser-99 phosphorylated form binds 14-3-3 proteins. Interacts with AKT1 and PIM3. Interacts (via BH3 domain) with NOL3 (via CARD domain); preventing the association of BAD with BCL2. Interacts with HIF3A (via C-terminus domain); the interaction reduces the binding between BAD and BAX. Interacts with GIMAP3/IAN4 and GIMAP5/IAN5. Post-translationally, phosphorylated on one or more of Ser-75, Ser-99, Ser-118 and Ser-134 in response to survival stimuli, which blocks its pro-apoptotic activity. Phosphorylation on Ser-99 or Ser-75 promotes heterodimerization with 14-3-3 proteins. This interaction then facilitates the phosphorylation at Ser-118, a site within the BH3 motif, leading to the release of Bcl-X(L) and the promotion of cell survival. Ser-99 is the major site of AKT/PKB phosphorylation, Ser-118 the major site of protein kinase A (CAPK) phosphorylation. Phosphorylation at Ser-99 by PKB/AKT1 is almost completely blocked by the apoptotic C-terminus cleavage product of PKN2 generated by caspases-3 activity during apoptosis. In terms of processing, methylation at Arg-94 and Arg-96 by PRMT1 inhibits Akt-mediated phosphorylation at Ser-99. As to expression, expressed in a wide variety of tissues.

It localises to the mitochondrion outer membrane. The protein localises to the cytoplasm. Its function is as follows. Promotes cell death. Successfully competes for the binding to Bcl-X(L), Bcl-2 and Bcl-W, thereby affecting the level of heterodimerization of these proteins with BAX. Can reverse the death repressor activity of Bcl-X(L), but not that of Bcl-2. Appears to act as a link between growth factor receptor signaling and the apoptotic pathways. The chain is Bcl2-associated agonist of cell death (BAD) from Homo sapiens (Human).